The following is a 94-amino-acid chain: MTKSELIERLATQQSHIPAKTVEDAVKEMLEHMASTLAQGERIEIRGFGSFSLHYRAPRTGRNPKTGDKVELEGKYVPHFKPGKELRDRANIYG.

The protein belongs to the bacterial histone-like protein family. As to quaternary structure, heterodimer of an alpha and a beta chain.

Functionally, this protein is one of the two subunits of integration host factor, a specific DNA-binding protein that functions in genetic recombination as well as in transcriptional and translational control. The chain is Integration host factor subunit beta from Escherichia coli (strain UTI89 / UPEC).